Here is a 233-residue protein sequence, read N- to C-terminus: Uracil-DNA glycosylase (233 aa).

Residue Asp70 is the Proton acceptor of the active site.

This sequence belongs to the uracil-DNA glycosylase (UDG) superfamily. UNG family.

The protein localises to the cytoplasm. The catalysed reaction is Hydrolyzes single-stranded DNA or mismatched double-stranded DNA and polynucleotides, releasing free uracil.. Functionally, excises uracil residues from the DNA which can arise as a result of misincorporation of dUMP residues by DNA polymerase or due to deamination of cytosine. This chain is Uracil-DNA glycosylase, found in Helicobacter pylori (strain HPAG1).